The chain runs to 147 residues: Large ribosomal subunit protein bL9 (147 aa).

It belongs to the bacterial ribosomal protein bL9 family.

Its function is as follows. Binds to the 23S rRNA. The protein is Large ribosomal subunit protein bL9 of Geobacter sp. (strain M21).